A 506-amino-acid polypeptide reads, in one-letter code: Acetaldehyde dehydrogenase (506 aa).

Residues Glu262 and Cys301 contribute to the active site.

This sequence belongs to the aldehyde dehydrogenase family.

The enzyme catalyses acetaldehyde + NAD(+) + H2O = acetate + NADH + 2 H(+). It participates in alcohol metabolism; ethanol degradation; acetate from ethanol: step 2/2. Functionally, catalyzes the NAD(+)-dependent oxidation of acetaldehyde to acetate. Is likely a component of the ethanol oxidation system that allows P.aeruginosa to grow on ethanol as the sole carbon and energy source. This chain is Acetaldehyde dehydrogenase, found in Pseudomonas aeruginosa.